The primary structure comprises 237 residues: BTB/POZ domain-containing protein KCTD6 (237 aa).

The region spanning 12–81 is the BTB domain; the sequence is HPVTLNVGGH…LRTSELTLPV (70 aa).

Homopentamer. May be part of a cullin-containing E3 ubiquitin-protein ligase complex.

It participates in protein modification; protein ubiquitination. Functionally, probable substrate-specific adapter of a cullin-containing E3 ubiquitin-protein ligase complex mediating the ubiquitination and subsequent proteasomal degradation of target proteins. The protein is BTB/POZ domain-containing protein KCTD6 (kctd6) of Danio rerio (Zebrafish).